The following is a 404-amino-acid chain: Arginine biosynthesis bifunctional protein ArgJ (404 aa).

Positions 166, 189, 200, 280, 399, and 404 each coordinate substrate. Catalysis depends on Thr200, which acts as the Nucleophile.

This sequence belongs to the ArgJ family. As to quaternary structure, heterotetramer of two alpha and two beta chains.

Its subcellular location is the cytoplasm. The enzyme catalyses N(2)-acetyl-L-ornithine + L-glutamate = N-acetyl-L-glutamate + L-ornithine. It catalyses the reaction L-glutamate + acetyl-CoA = N-acetyl-L-glutamate + CoA + H(+). It participates in amino-acid biosynthesis; L-arginine biosynthesis; L-ornithine and N-acetyl-L-glutamate from L-glutamate and N(2)-acetyl-L-ornithine (cyclic): step 1/1. The protein operates within amino-acid biosynthesis; L-arginine biosynthesis; N(2)-acetyl-L-ornithine from L-glutamate: step 1/4. Its function is as follows. Catalyzes two activities which are involved in the cyclic version of arginine biosynthesis: the synthesis of N-acetylglutamate from glutamate and acetyl-CoA as the acetyl donor, and of ornithine by transacetylation between N(2)-acetylornithine and glutamate. This is Arginine biosynthesis bifunctional protein ArgJ from Mycolicibacterium paratuberculosis (strain ATCC BAA-968 / K-10) (Mycobacterium paratuberculosis).